Reading from the N-terminus, the 704-residue chain is MVHVNPIVKSFQYGQHTVTLETGVIARQADAAVLASMGDTTVLVTVVGKKFEEPGRDFFPLTVNYQEKTYAAGKIPGGFFKREGRPSEGETLTARLIDRPIRPLFPNGFKNEVQVIITVVSVDPEISPEVISMIGTSAALSISGIPFNGPLGSARVGYVNGEYILNPTVSQLVDSQLELSVAGTESAVLMVESEASALPEEVMLGAVVYGHDQQQVVIQAIKELQAEVNKPVWDWSAPAQDETLVAKIKDLAEAGLTEAYQIEVKQDRYAQVGVVKNAAKEALLAENPDANTREIDGLLGSLEKKVVRGRIISGQPRIDGREPDMVRALNVMAGVLPRTHGSSLFTRGETQALVTCTLGTERDAQKIDSIMGEYTNRFMLHYNFPPYSVGETGMVGSPKRREIGHGKLAWRGINAVMPTAEEFPYSVRIVSEITESNGSSSMASVCGTSLALMDAGVPIKTSVAGIAMGLVKEGDDFVVLSDILGDEDHLGDMDFKVAGTRDGITALQMDIKIEGITKEIMQIALKQAYGARVHILDVMDRAISGHRGDISEHAPRITTIKINPEKIRDVIGKGGATIRALTEETGTTIELDDDGTVKIASSNGEATKEAIRRIEEITAEVEVGTVYNGKVVRIVDFGAFVTILPGKDGLVHISQIAEERVANVSDYLEVGQEVKVKVMEVDRQGRVRLSMKEAAPKAEAPAAE.

Mg(2+) is bound by residues Asp-488 and Asp-494. The KH domain maps to 555-614 (PRITTIKINPEKIRDVIGKGGATIRALTEETGTTIELDDDGTVKIASSNGEATKEAIRRI). The region spanning 624-692 (GTVYNGKVVR…RQGRVRLSMK (69 aa)) is the S1 motif domain.

It belongs to the polyribonucleotide nucleotidyltransferase family. As to quaternary structure, component of the RNA degradosome, which is a multiprotein complex involved in RNA processing and mRNA degradation. Requires Mg(2+) as cofactor.

It localises to the cytoplasm. The catalysed reaction is RNA(n+1) + phosphate = RNA(n) + a ribonucleoside 5'-diphosphate. Involved in mRNA degradation. Catalyzes the phosphorolysis of single-stranded polyribonucleotides processively in the 3'- to 5'-direction. The sequence is that of Polyribonucleotide nucleotidyltransferase from Shewanella pealeana (strain ATCC 700345 / ANG-SQ1).